We begin with the raw amino-acid sequence, 255 residues long: U2 small nuclear ribonucleoprotein A' (255 aa).

4 LRR repeats span residues 20–41 (RDRE…GATL), 43–64 (QFDA…PLLR), 65–86 (RLKT…LDQA), and 89–110 (CLTE…DPLA). The LRRCT domain occupies 123 to 161 (NPVTNKKHYRLYVIYKVPQVRVLDFQKVKLKERQEAEKM). Lysine 172 is modified (N6-acetyllysine; alternate). Lysine 172 participates in a covalent cross-link: Glycyl lysine isopeptide (Lys-Gly) (interchain with G-Cter in SUMO2); alternate. 2 positions are modified to phosphoserine: serine 178 and serine 197. Residues 179–199 (KTFNPGAGLPTDKKKGGPSAG) form a disordered region. Residue lysine 221 forms a Glycyl lysine isopeptide (Lys-Gly) (interchain with G-Cter in SUMO2) linkage. The disordered stretch occupies residues 222-255 (GLLQSGQIPGRERRSGPSDEGEEEIEDDTVTNGS). Phosphoserine occurs at positions 236 and 255. Residues 240–255 (DEGEEEIEDDTVTNGS) show a composition bias toward acidic residues.

The protein belongs to the U2 small nuclear ribonucleoprotein A family. Identified in the spliceosome B complex. Identified in the spliceosome C complex. Found in a pre-mRNA splicing complex with SFRS4, SFRS5, SNRNP70, SNRPA1, SRRM1 and SRRM2. Found in a pre-mRNA exonic splicing enhancer (ESE) complex with SNRNP70, SNRPA1, SRRM1 and TRA2B. Contributes to the binding of stem loop IV of U2 snRNA with SNRPB2.

The protein resides in the nucleus. Its function is as follows. Involved in pre-mRNA splicing as component of the spliceosome. Associated with sn-RNP U2, where it contributes to the binding of stem loop IV of U2 snRNA. This chain is U2 small nuclear ribonucleoprotein A' (Snrpa1), found in Mus musculus (Mouse).